The sequence spans 480 residues: Glycogen synthase (480 aa).

Lys15 contacts ADP-alpha-D-glucose.

It belongs to the glycosyltransferase 1 family. Bacterial/plant glycogen synthase subfamily.

The catalysed reaction is [(1-&gt;4)-alpha-D-glucosyl](n) + ADP-alpha-D-glucose = [(1-&gt;4)-alpha-D-glucosyl](n+1) + ADP + H(+). Its pathway is glycan biosynthesis; glycogen biosynthesis. In terms of biological role, synthesizes alpha-1,4-glucan chains using ADP-glucose. The protein is Glycogen synthase of Opitutus terrae (strain DSM 11246 / JCM 15787 / PB90-1).